The chain runs to 107 residues: Small ribosomal subunit protein bS18 (107 aa).

This sequence belongs to the bacterial ribosomal protein bS18 family. Part of the 30S ribosomal subunit. Forms a tight heterodimer with protein bS6.

Its function is as follows. Binds as a heterodimer with protein bS6 to the central domain of the 16S rRNA, where it helps stabilize the platform of the 30S subunit. The sequence is that of Small ribosomal subunit protein bS18 from Mycoplasmopsis agalactiae (strain NCTC 10123 / CIP 59.7 / PG2) (Mycoplasma agalactiae).